Here is a 157-residue protein sequence, read N- to C-terminus: Ribosomal RNA large subunit methyltransferase H (157 aa).

S-adenosyl-L-methionine contacts are provided by residues leucine 74, glycine 106, and 125–130; that span reads LGNITF.

This sequence belongs to the RNA methyltransferase RlmH family. In terms of assembly, homodimer.

The protein localises to the cytoplasm. It catalyses the reaction pseudouridine(1915) in 23S rRNA + S-adenosyl-L-methionine = N(3)-methylpseudouridine(1915) in 23S rRNA + S-adenosyl-L-homocysteine + H(+). Its function is as follows. Specifically methylates the pseudouridine at position 1915 (m3Psi1915) in 23S rRNA. The protein is Ribosomal RNA large subunit methyltransferase H of Lawsonia intracellularis (strain PHE/MN1-00).